A 288-amino-acid polypeptide reads, in one-letter code: Polyamine aminopropyltransferase (288 aa).

One can recognise a PABS domain in the interval 9 to 238 (ETLHDQFGQY…GIMTFAWATD (230 aa)). Residue Gln-33 participates in S-methyl-5'-thioadenosine binding. Spermidine is bound by residues His-64 and Asp-88. S-methyl-5'-thioadenosine contacts are provided by residues Glu-108 and 140-141 (DG). Asp-158 (proton acceptor) is an active-site residue. 158–161 (DCTD) is a spermidine binding site. S-methyl-5'-thioadenosine is bound at residue Pro-165.

Belongs to the spermidine/spermine synthase family. As to quaternary structure, homodimer or homotetramer.

Its subcellular location is the cytoplasm. The catalysed reaction is S-adenosyl 3-(methylsulfanyl)propylamine + putrescine = S-methyl-5'-thioadenosine + spermidine + H(+). It functions in the pathway amine and polyamine biosynthesis; spermidine biosynthesis; spermidine from putrescine: step 1/1. Its function is as follows. Catalyzes the irreversible transfer of a propylamine group from the amino donor S-adenosylmethioninamine (decarboxy-AdoMet) to putrescine (1,4-diaminobutane) to yield spermidine. This chain is Polyamine aminopropyltransferase, found in Shigella boydii serotype 18 (strain CDC 3083-94 / BS512).